Reading from the N-terminus, the 230-residue chain is Probable septum site-determining protein MinC (230 aa).

Belongs to the MinC family. In terms of assembly, interacts with MinD and FtsZ.

Cell division inhibitor that blocks the formation of polar Z ring septums. Rapidly oscillates between the poles of the cell to destabilize FtsZ filaments that have formed before they mature into polar Z rings. Prevents FtsZ polymerization. This is Probable septum site-determining protein MinC from Cronobacter sakazakii (strain ATCC BAA-894) (Enterobacter sakazakii).